We begin with the raw amino-acid sequence, 65 residues long: Large ribosomal subunit protein bL33c (65 aa).

This sequence belongs to the bacterial ribosomal protein bL33 family.

The protein localises to the plastid. It is found in the chloroplast. This Staurastrum punctulatum (Green alga) protein is Large ribosomal subunit protein bL33c.